The following is a 460-amino-acid chain: tRNA (guanine(10)-N(2))-methyltransferase TRMT11 (460 aa).

Position 2 is an N-acetylalanine (A2).

It belongs to the class I-like SAM-binding methyltransferase superfamily. TRM11 methyltransferase family. In terms of assembly, part of the heterodimeric TRMT11-TRM112 methyltransferase complex; this complex forms an active tRNA methyltransferase, where TRMT112 acts as an activator of the catalytic subunit TRMT11.

The protein resides in the cytoplasm. It catalyses the reaction guanosine(10) in tRNA + S-adenosyl-L-methionine = N(2)-methylguanosine(10) in tRNA + S-adenosyl-L-homocysteine + H(+). Its function is as follows. Catalytic subunit of the TRMT11-TRM112 methyltransferase complex, that specifically mediates the S-adenosyl-L-methionine-dependent N(2)-methylation of guanosine nucleotide at position 10 (m2G10) in tRNAs. This is one of the major tRNA (guanine-N(2))-methyltransferases. The sequence is that of tRNA (guanine(10)-N(2))-methyltransferase TRMT11 from Bos taurus (Bovine).